A 469-amino-acid chain; its full sequence is Calcium-binding mitochondrial carrier protein SCaMC-2-A (469 aa).

The Mitochondrial intermembrane segment spans residues 1–189 (MLCLCLYVPV…EHLTGMWWRH (189 aa)). EF-hand domains follow at residues 47–80 (TYRR…QDHE), 78–113 (DHEK…LGVH), and 114–149 (ISLK…QPAE). Ca(2+) is bound by residues Asp64, Gln66, and Glu71. Solcar repeat units lie at residues 184 to 270 (GMWW…IKRV), 278 to 363 (LGIS…LKNT), and 375 to 463 (PGVF…IKST). Residues 190 to 207 (LVSGGGAGAVSRTCTAPL) form a helical membrane-spanning segment. The Mitochondrial matrix segment spans residues 208–244 (DRLKVLMQVHGCQGKSMCLMSGLTQMIKEGGVRSLWR). A helical transmembrane segment spans residues 245–264 (GNGINVIKIAPETALKFMAY). At 265 to 287 (EQIKRVMGSSQETLGISERFVAG) the chain is on the mitochondrial intermembrane side. The chain crosses the membrane as a helical span at residues 288–301 (SLAGVIAQSTIYPM). At 302–337 (EVLKTRLALRKTGQYKGISDCAKHILKTEGMSAFYK) the chain is on the mitochondrial matrix side. A helical membrane pass occupies residues 338–357 (GYVPNMLGIIPYAGIDLAVY). Over 358–380 (ETLKNTWLQRYGTENADPGVFVL) the chain is Mitochondrial intermembrane. Residues 381 to 398 (LACGTVSSTCGQLASYPL) form a helical membrane-spanning segment. Residues 399 to 437 (ALIRTRMQAQASVEGSSQVSMTGLFKQIMKTEGPTGLYR) are Mitochondrial matrix-facing. The helical transmembrane segment at 438-457 (GLTPNFLKVIPAVSISYVVY) threads the bilayer. The Mitochondrial intermembrane segment spans residues 458-469 (EHIKSTLGVRSR).

This sequence belongs to the mitochondrial carrier (TC 2.A.29) family.

It localises to the mitochondrion inner membrane. Functionally, calcium-dependent mitochondrial solute carrier. This is Calcium-binding mitochondrial carrier protein SCaMC-2-A (slc25a25a) from Danio rerio (Zebrafish).